The sequence spans 651 residues: Bromodomain-containing protein 7 (651 aa).

Disordered stretches follow at residues 36-133 (ELST…EVEQ) and 257-298 (KDKV…KKKD). Residues 58-69 (HKDRKRKKRKKG) show a composition bias toward basic residues. The short motif at 65–96 (KRKKGEKQVPGEEKEKRKRKVKEDKRKRDREH) is the Nuclear localization signal element. The segment covering 70–105 (EKQVPGEEKEKRKRKVKEDKRKRDREHPDSEGEQEL) has biased composition (basic and acidic residues). Positions 131-235 (VEQTPLQEAL…HSGMKILSQE (105 aa)) constitute a Bromo domain. A compositionally biased stretch (basic and acidic residues) spans 271-298 (GSGKDKGEPVDGDTKAFKTPNKEHKKKD). Positions 533–564 (SEEAEIFQRKLDETTKLLRELQDAQNERLSTK) form a coiled coil.

The protein localises to the nucleus. It localises to the chromosome. Functionally, acts both as coactivator and as corepressor. May play a role in chromatin remodeling. Participates in the Wnt signaling pathway. Transcriptional corepressor that down-regulates the expression of target genes. Binds to target promoters, leading to increased histone H3 acetylation. Coactivator for TP53-mediated activation of transcription of a set of target genes. Required for TP53-mediated cell-cycle arrest in response to oncogene activation. Inhibits cell cycle progression from G1 to S phase. In Gallus gallus (Chicken), this protein is Bromodomain-containing protein 7 (BRD7).